The following is a 954-amino-acid chain: Endoplasmic reticulum aminopeptidase 2 (954 aa).

At 1-7 (MANSCRK) the chain is on the cytoplasmic side. Residues 8–28 (LIFNIYVVFYCSAVIMPQICI) traverse the membrane as a helical; Signal-anchor for type II membrane protein segment. The Lumenal portion of the chain corresponds to 29 to 954 (CSQFTSSPID…TLRKWLLTSI (926 aa)). Asparagine 79 and asparagine 113 each carry an N-linked (GlcNAc...) asparagine glycan. Substrate-binding positions include glutamate 194 and 328–332 (GAMEN). Histidine 364 is a Zn(2+) binding site. Glutamate 365 serves as the catalytic Proton acceptor. Residues histidine 368 and glutamate 387 each contribute to the Zn(2+) site. A glycan (N-linked (GlcNAc...) asparagine) is linked at asparagine 399. A disulfide bridge links cysteine 415 with cysteine 454. Residue asparagine 644 is glycosylated (N-linked (GlcNAc...) asparagine). A disulfide bridge connects residues cysteine 753 and cysteine 760.

The protein belongs to the peptidase M1 family. In terms of assembly, heterodimer with ERAP1. It depends on Zn(2+) as a cofactor. Post-translationally, N-glycosylated.

It is found in the endoplasmic reticulum membrane. In terms of biological role, aminopeptidase that plays a central role in peptide trimming, a step required for the generation of most HLA class I-binding peptides. Peptide trimming is essential to customize longer precursor peptides to fit them to the correct length required for presentation on MHC class I molecules. Preferentially hydrolyzes the basic residues Arg and Lys. The protein is Endoplasmic reticulum aminopeptidase 2 (ERAP2) of Bos taurus (Bovine).